A 300-amino-acid chain; its full sequence is 4-hydroxy-tetrahydrodipicolinate synthase (300 aa).

Thr45 serves as a coordination point for pyruvate. Residue Tyr140 is the Proton donor/acceptor of the active site. The Schiff-base intermediate with substrate role is filled by Lys169. Ile210 provides a ligand contact to pyruvate.

Belongs to the DapA family. Homotetramer; dimer of dimers.

It is found in the cytoplasm. The catalysed reaction is L-aspartate 4-semialdehyde + pyruvate = (2S,4S)-4-hydroxy-2,3,4,5-tetrahydrodipicolinate + H2O + H(+). It functions in the pathway amino-acid biosynthesis; L-lysine biosynthesis via DAP pathway; (S)-tetrahydrodipicolinate from L-aspartate: step 3/4. Catalyzes the condensation of (S)-aspartate-beta-semialdehyde [(S)-ASA] and pyruvate to 4-hydroxy-tetrahydrodipicolinate (HTPA). The polypeptide is 4-hydroxy-tetrahydrodipicolinate synthase (Helicobacter pylori (strain G27)).